We begin with the raw amino-acid sequence, 410 residues long: Arginine deiminase (410 aa).

Cys400 serves as the catalytic Amidino-cysteine intermediate.

The protein belongs to the arginine deiminase family.

It is found in the cytoplasm. It catalyses the reaction L-arginine + H2O = L-citrulline + NH4(+). It functions in the pathway amino-acid degradation; L-arginine degradation via ADI pathway; carbamoyl phosphate from L-arginine: step 1/2. The polypeptide is Arginine deiminase (Streptococcus agalactiae serotype Ia (strain ATCC 27591 / A909 / CDC SS700)).